The sequence spans 409 residues: S-adenosylmethionine synthase (409 aa).

ATP is bound at residue 141 to 146 (GQGSAD).

The protein belongs to the AdoMet synthase 2 family. Mg(2+) is required as a cofactor.

The enzyme catalyses L-methionine + ATP + H2O = S-adenosyl-L-methionine + phosphate + diphosphate. It functions in the pathway amino-acid biosynthesis; S-adenosyl-L-methionine biosynthesis; S-adenosyl-L-methionine from L-methionine: step 1/1. In terms of biological role, catalyzes the formation of S-adenosylmethionine from methionine and ATP. The chain is S-adenosylmethionine synthase from Hyperthermus butylicus (strain DSM 5456 / JCM 9403 / PLM1-5).